Reading from the N-terminus, the 226-residue chain is Neuron-specific vesicular protein calcyon (226 aa).

The tract at residues 1–23 is disordered; sequence MVKLGCSFSGKPGKETGDQDGAA. Topologically, residues 1 to 88 are extracellular; it reads MVKLGCSFSG…EEGRRLPTAR (88 aa). A helical membrane pass occupies residues 89-109; it reads MIAFAMALLGCVLIMYKAIWY. The Cytoplasmic portion of the chain corresponds to 110 to 226; it reads DQFTCPDGFL…AEDVPSQSPK (117 aa). Positions 189-226 are disordered; that stretch reads TAAAAAAAEGNEPSGKPLDMREKEDPQKAEDVPSQSPK. Positions 206-219 are enriched in basic and acidic residues; the sequence is LDMREKEDPQKAED.

It belongs to the NSG family. In terms of assembly, interacts with CLTA. In terms of tissue distribution, expressed exclusively in neurons (at protein level). In all age groups, expressed at significantly higher levels in the medial prefrontal and orbital frontal cortices of spontaneously hypertensive rats (SHR), a model of attention deficit-hyperactivity disorder, than Wistar Kyoto (WKY) animals. In the motor cortex, dorsal striatum and nucleus accumbens, expression is significantly elevated in SHR only in younger animals.

It localises to the cytoplasmic vesicle membrane. The protein resides in the cell membrane. In terms of biological role, interacts with clathrin light chain A and stimulates clathrin self-assembly and clathrin-mediated endocytosis. This chain is Neuron-specific vesicular protein calcyon (Caly), found in Rattus norvegicus (Rat).